Consider the following 369-residue polypeptide: S-adenosylmethionine:tRNA ribosyltransferase-isomerase (369 aa).

The protein belongs to the QueA family. In terms of assembly, monomer.

Its subcellular location is the cytoplasm. It carries out the reaction 7-aminomethyl-7-carbaguanosine(34) in tRNA + S-adenosyl-L-methionine = epoxyqueuosine(34) in tRNA + adenine + L-methionine + 2 H(+). The protein operates within tRNA modification; tRNA-queuosine biosynthesis. Its function is as follows. Transfers and isomerizes the ribose moiety from AdoMet to the 7-aminomethyl group of 7-deazaguanine (preQ1-tRNA) to give epoxyqueuosine (oQ-tRNA). The protein is S-adenosylmethionine:tRNA ribosyltransferase-isomerase of Synechococcus sp. (strain CC9311).